Reading from the N-terminus, the 351-residue chain is UPF0421 protein BC_2748 (351 aa).

The next 4 helical transmembrane spans lie at 19-39 (IAVFLTVLVCDFFNIPTIFAV), 74-94 (FTFFLGHQAISYALAAMFTIV), 109-129 (TLTAVAMIPITANHYFTAFLI), and 131-151 (LATTSTGIIVSTLVNFFIFPP).

It belongs to the UPF0421 family.

Its subcellular location is the cell membrane. This Bacillus cereus (strain ATCC 14579 / DSM 31 / CCUG 7414 / JCM 2152 / NBRC 15305 / NCIMB 9373 / NCTC 2599 / NRRL B-3711) protein is UPF0421 protein BC_2748.